A 679-amino-acid polypeptide reads, in one-letter code: Glycine--tRNA ligase beta subunit (679 aa).

Belongs to the class-II aminoacyl-tRNA synthetase family. Tetramer of two alpha and two beta subunits.

Its subcellular location is the cytoplasm. The enzyme catalyses tRNA(Gly) + glycine + ATP = glycyl-tRNA(Gly) + AMP + diphosphate. The chain is Glycine--tRNA ligase beta subunit from Streptococcus pyogenes serotype M18 (strain MGAS8232).